The sequence spans 2646 residues: Probable helicase senataxin (2646 aa).

Ser-102 carries the phosphoserine modification. Lys-339 is covalently cross-linked (Glycyl lysine isopeptide (Lys-Gly) (interchain with G-Cter in SUMO1)). Position 640 is a phosphoserine (Ser-640). Disordered stretches follow at residues 705-734 (KISA…WGCD) and 825-876 (GGAL…DDED). The segment covering 714–727 (ESSSYAPSNSTSRN) has biased composition (polar residues). Acidic residues predominate over residues 867 to 876 (LDNSSSDDED). A phosphoserine mark is found at Ser-870, Ser-871, Ser-872, Ser-938, Ser-1002, and Ser-1004. The segment at 1001–1023 (ISDSDEEEDEDEDERSSSEENIK) is disordered. Acidic residues predominate over residues 1003–1014 (DSDEEEDEDEDE). Lys-1051 participates in a covalent cross-link: Glycyl lysine isopeptide (Lys-Gly) (interchain with G-Cter in SUMO2). Positions 1122 to 1133 (RNKAEGVKEHAG) are enriched in basic and acidic residues. Residues 1122–1245 (RNKAEGVKEH…DTRRGQSKSS (124 aa)) are disordered. The span at 1147-1156 (GVKKPKRKRY) shows a compositional bias: basic residues. The segment covering 1176–1189 (LPDRRDLTESDLKS) has biased composition (basic and acidic residues). Positions 1196–1211 (TPSSSVERDSTILQKS) are enriched in polar residues. The segment covering 1212-1222 (TKSRTHSKPVR) has biased composition (basic residues). Ser-1318 carries the phosphoserine modification. Glycyl lysine isopeptide (Lys-Gly) (interchain with G-Cter in SUMO2) cross-links involve residues Lys-1328, Lys-1329, and Lys-1398. Ser-1472 is modified (phosphoserine). Thr-1474 is modified (phosphothreonine). A disordered region spans residues 1591–1627 (LSKSLESTTLQQSALKNKSSGAQPNLKVTPPSSMGSQ). Residues 1595 to 1613 (LESTTLQQSALKNKSSGAQ) are compositionally biased toward polar residues. 1939–1946 (GPPGTGKS) is a binding site for ATP. The Bipartite nuclear localization signal signature appears at 2046–2063 (KKDLPSHIQEMLRRKEIL). Thr-2450 is subject to Phosphothreonine. Disordered stretches follow at residues 2450–2472 (THPP…NRLD), 2486–2506 (HTPS…QDRL), and 2569–2624 (SHRS…THHV). Composition is skewed to basic and acidic residues over residues 2496-2506 (GPERPLLQDRL) and 2593-2608 (KYSD…REPR). Positions 2632–2646 (RRRLDDSSAKRRQFL) are necessary for nuclear localization.

This sequence belongs to the DNA2/NAM7 helicase family. In terms of assembly, homodimer. Interacts with PER2; the interaction inhibits termination of circadian target genes. Interacts with CHD4, POLR2A, PRKDC and TRIM28. Interacts with UBE2I. Interacts (via N-terminus domain) with EXOSC9 (via C-terminus region); the interaction enhances SETX sumoylation. Interacts with NCL (via N-terminus domain). Interacts with PABPN1, PABPC1 and SF3B1. Interacts with SMN1/SMN2 and POLR2A; SMN1/SMN2 recruits SETX to POLR2A. Ubiquitinated. Post-translationally, sumoylated preferentially with SUMO2 or SUMO3. As to expression, expressed in cerebellum, hippocampus, olfactory bulb, Bergmann glial fibers, stellate cells and Purkinje cells. Expressed in the epithelial cells of the lens but not in mature lens fiber cells. Expressed in the retina (highly expressed in inner and outer segments of photoreceptors and outer plexiform layer cells but weakly expressed in the inner plexiform and ganglion cell layers). Expressed in the kidney.

It is found in the nucleus. The protein localises to the nucleoplasm. It localises to the nucleolus. The protein resides in the cytoplasm. Its subcellular location is the chromosome. It is found in the telomere. The protein localises to the cell projection. It localises to the axon. The protein resides in the growth cone. In terms of biological role, probable RNA/DNA helicase involved in diverse aspects of RNA metabolism and genomic integrity. Plays a role in transcription regulation by its ability to modulate RNA Polymerase II (Pol II) binding to chromatin and through its interaction with proteins involved in transcription. Contributes to the mRNA splicing efficiency and splice site selection. Required for the resolution of R-loop RNA-DNA hybrid formation at G-rich pause sites located downstream of the poly(A) site, allowing XRN2 recruitment and XRN2-mediated degradation of the downstream cleaved RNA and hence efficient RNA polymerase II (RNAp II) transcription termination. Required for the 3' transcriptional termination of PER1 and CRY2, thus playing an important role in the circadian rhythm regulation. Involved in DNA double-strand breaks damage response generated by oxidative stress. In association with RRP45, targets the RNA exosome complex to sites of transcription-induced DNA damage. Plays a role in the development and maturation of germ cells: essential for male meiosis, acting at the interface of transcription and meiotic recombination, and in the process of gene silencing during meiotic sex chromosome inactivation (MSCI). Plays a role in neurite outgrowth in hippocampal cells through FGF8-activated signaling pathways. Inhibits retinoic acid-induced apoptosis. May be involved in telomeric stability through the regulation of telomere repeat-containing RNA (TERRA) transcription. In Mus musculus (Mouse), this protein is Probable helicase senataxin.